A 101-amino-acid chain; its full sequence is Large ribosomal subunit protein uL24 (101 aa).

This sequence belongs to the universal ribosomal protein uL24 family. As to quaternary structure, part of the 50S ribosomal subunit.

Its function is as follows. One of two assembly initiator proteins, it binds directly to the 5'-end of the 23S rRNA, where it nucleates assembly of the 50S subunit. Functionally, one of the proteins that surrounds the polypeptide exit tunnel on the outside of the subunit. The polypeptide is Large ribosomal subunit protein uL24 (Jannaschia sp. (strain CCS1)).